We begin with the raw amino-acid sequence, 606 residues long: Major centromere autoantigen B (606 aa).

Gly-2 is subject to N,N,N-trimethylglycine. In terms of domain architecture, HTH psq-type spans 2–52 (GPKRRQLTFREKSRIIQEVEENPDLRKGEIARRFNIPPSTLSTILKNKRAI). 2 DNA-binding regions (H-T-H motif) span residues 28–48 (KGEI…ILKN) and 97–129 (GIIL…FRRR). One can recognise an HTH CENPB-type domain in the interval 65–136 (CRKTNKLSPY…RRRHGVVACS (72 aa)). A disordered region spans residues 138–184 (VTRSRARTSTPRAPAAPAGPAAVPSEGSGGSTPGWRTREEQPPSVAE). Over residues 144–163 (RTSTPRAPAAPAGPAAVPSE) the composition is skewed to low complexity. Residue Ser-165 is modified to Phosphoserine. Lys-246 is covalently cross-linked (Glycyl lysine isopeptide (Lys-Gly) (interchain with G-Cter in SUMO2)). Disordered stretches follow at residues 392–480 (GLNA…LEAE) and 504–549 (CPTL…VPVP). Phosphothreonine occurs at positions 396 and 398. Acidic residues-rich tracts occupy residues 405–480 (GEEE…LEAE) and 512–545 (GGED…DGDE). Residues 543–606 (GDEVPVPSFG…AGVRGLGHQS (64 aa)) form a homodimerization region.

Antiparallel homodimer. Interacts with CENPT. Identified in a centromere complex containing histones H2A, H2B and H4, and at least CENPA, CENPB, CENPC, CENPT, CENPN, HJURP, SUPT16H, SSRP1 and RSF1. Poly-ADP-ribosylated by PARP1. In terms of processing, N-terminally methylated by METTL11A/NTM1. Alpha-N-methylation is stimulated in response to extracellular stimuli, including increased cell density and heat shock, and seems to facilitate binding to CENP-B boxes. Chromatin-bound CENP-B is primarily trimethylated.

Its subcellular location is the nucleus. The protein localises to the chromosome. It is found in the centromere. Functionally, interacts with centromeric heterochromatin in chromosomes and binds to a specific 17 bp subset of alphoid satellite DNA, called the CENP-B box. May organize arrays of centromere satellite DNA into a higher-order structure which then directs centromere formation and kinetochore assembly in mammalian chromosomes. The sequence is that of Major centromere autoantigen B (CENPB) from Cricetulus griseus (Chinese hamster).